The following is a 308-amino-acid chain: Probable manganese-dependent inorganic pyrophosphatase (308 aa).

Mn(2+) contacts are provided by His-9, Asp-13, Asp-15, Asp-75, His-97, and Asp-149.

The protein belongs to the PPase class C family. Requires Mn(2+) as cofactor.

It localises to the cytoplasm. The catalysed reaction is diphosphate + H2O = 2 phosphate + H(+). This Staphylococcus carnosus (strain TM300) protein is Probable manganese-dependent inorganic pyrophosphatase.